A 452-amino-acid chain; its full sequence is uncharacterized protein (452 aa).

The TRAM domain occupies Lys3–Lys61. The [4Fe-4S] cluster site is built by Cys74, Cys80, Cys83, and Cys160. Gln284, Tyr313, Glu334, and Asp382 together coordinate S-adenosyl-L-methionine. Catalysis depends on Cys409, which acts as the Nucleophile.

Belongs to the class I-like SAM-binding methyltransferase superfamily. RNA M5U methyltransferase family.

This is an uncharacterized protein from Caldanaerobacter subterraneus subsp. tengcongensis (strain DSM 15242 / JCM 11007 / NBRC 100824 / MB4) (Thermoanaerobacter tengcongensis).